We begin with the raw amino-acid sequence, 403 residues long: MGCYQSRVQVEDKTNEQLDKYLVQAGKEGLLDFRILLLGAGESGKSTVVKQLKSIYKIQVDDDELHSYAVNIHKNTVLCMQVLLEAGETLGIELTDPETKKRAINVKSFQFEPEVKQMPVSIGLDIEELWRDEDIQKIWDRRSEYWFLDATPYYFENIQRFLDDDFVPTEEDCIMTRVRTTGISVTEFDEGPVHFRVVDVGGQRNERKKWIHCFDDVKALLFVVNLAGYDQVMFEDPSQNRMQESLTLFGQICNNPIFSETPTFLVLNKKDLFEQMIQKTDLSKCFPDYKGGSDVKTALEFIQMKYQQKIQESNKPLHTFHIAARYKKDIKYTWEEAKGILLEENKKVLMKATKDLKKSSKQSSKSSLGNSTQNNSNNNNNNNNSNNNNGQTTIDGATAKINS.

A lipid anchor (N-myristoyl glycine) is attached at G2. Residue C3 is the site of S-palmitoyl cysteine attachment. The G-alpha domain occupies 31 to 356 (LDFRILLLGA…KVLMKATKDL (326 aa)). Residues 34–47 (RILLLGAGESGKST) form a G1 motif region. Residues 39 to 46 (GAGESGKS), 174 to 180 (IMTRVRT), 199 to 203 (DVGGQ), 268 to 271 (NKKD), and A324 each bind GTP. 2 residues coordinate Mg(2+): S46 and T180. Residues 172-180 (DCIMTRVRT) form a G2 motif region. The segment at 195 to 204 (FRVVDVGGQR) is G3 motif. Residues 264–271 (FLVLNKKD) form a G4 motif region. Residues 322–327 (IAARYK) form a G5 motif region. The tract at residues 353 to 403 (TKDLKKSSKQSSKSSLGNSTQNNSNNNNNNNNSNNNNGQTTIDGATAKINS) is disordered. Residues 374-389 (NNSNNNNNNNNSNNNN) are compositionally biased toward low complexity. Positions 390 to 403 (GQTTIDGATAKINS) are enriched in polar residues.

It belongs to the G-alpha family. G proteins are composed of 3 units; alpha, beta and gamma. The alpha chain contains the guanine nucleotide binding site.

Its function is as follows. Guanine nucleotide-binding proteins (G proteins) are involved as modulators or transducers in various transmembrane signaling systems. G alpha-8 is a potential analog for the G(s)-like G-proteins which stimulate adenylate cyclase in mammals. In Dictyostelium discoideum (Social amoeba), this protein is Guanine nucleotide-binding protein alpha-8 subunit (gpaH).